Here is a 564-residue protein sequence, read N- to C-terminus: R-linalool synthase (564 aa).

5 residues coordinate Mg(2+): Asp-320, Asp-324, Asp-464, Thr-468, and Glu-472. The DDXXD motif signature appears at 320-324 (DDVYD).

It belongs to the terpene synthase family. The cofactor is Mg(2+). Requires Mn(2+) as cofactor.

The enzyme catalyses (2E)-geranyl diphosphate + H2O = (R)-linalool + diphosphate. Functionally, specifically catalyzes production of (R)-(-)-linalool, the main component of lavender essential oil. The protein is R-linalool synthase of Lavandula angustifolia (Lavender).